The primary structure comprises 465 residues: MKVYNTLTNKKEEFLTLVPGEVKMYVCGPTVYNFFHIGNARTFVVFDTIRRYLEYRGYKVKFIQNFTDIDDKMIKRANEEGSTVKELGDRFIKEYYKDADDLNIERATKNPRATEFMEEIIKFVSDLIEKGYAYEIDGDVYFSTKKFNSYGKLSGQNLEELQLGARINVDERKKDPMDFAIWKSQKPGEPAWESPWGMGRPGWHIECSCMAYNLLGETIDIHAGGSDLSFPHHENEIAQSEARTGKQFAKYWLHSAFVNVNNQKMSKSLNNFFTAREILEKYDADVLRMFMLSGHYRTQINFSMELLDSTKSALDRLYNSINNLENLLDEVKNEELRDEELEYKNELQKYKEKYIEKMDDDFNTADAISVIFDLIRDVNTNVTIESSKELVKYTLDLIRELGSPLGILQESTKASLEEEIEKLIEERQKARKEKNWALADKIRDNLKERGIVLEDTPQGVRWKQI.

Zn(2+) is bound at residue Cys27. The short motif at 29-39 (PTVYNFFHIGN) is the 'HIGH' region element. Positions 207, 232, and 236 each coordinate Zn(2+). A 'KMSKS' region motif is present at residues 264–268 (KMSKS). Residue Lys267 coordinates ATP.

Belongs to the class-I aminoacyl-tRNA synthetase family. Monomer. The cofactor is Zn(2+).

The protein localises to the cytoplasm. The enzyme catalyses tRNA(Cys) + L-cysteine + ATP = L-cysteinyl-tRNA(Cys) + AMP + diphosphate. The sequence is that of Cysteine--tRNA ligase from Clostridium botulinum (strain Kyoto / Type A2).